The chain runs to 889 residues: Cytoplasmic aconitate hydratase (889 aa).

Substrate is bound by residues Q86 and 205 to 207 (DSH). Residues C437, C503, and C506 each coordinate [4Fe-4S] cluster. Substrate contacts are provided by residues R536, R541, R699, and 779–780 (SR).

Belongs to the aconitase/IPM isomerase family. Interacts (when associated with the 4Fe-4S) with FBXL5. Interacts with frataxin(81-210). [4Fe-4S] cluster is required as a cofactor.

Its subcellular location is the cytoplasm. The protein resides in the cytosol. It carries out the reaction citrate = D-threo-isocitrate. In terms of biological role, bifunctional iron sensor that switches between 2 activities depending on iron availability. Iron deprivation, promotes its mRNA binding activity through which it regulates the expression of genes involved in iron uptake, sequestration and utilization. Binds to iron-responsive elements (IRES) in the untranslated region of target mRNAs preventing for instance the translation of ferritin and aminolevulinic acid synthase and stabilizing the transferrin receptor mRNA. Its function is as follows. Conversely, when cellular iron levels are high, binds a 4Fe-4S cluster which precludes RNA binding activity and promotes the aconitase activity, the isomerization of citrate to isocitrate via cis-aconitate. The chain is Cytoplasmic aconitate hydratase (Aco1) from Mus musculus (Mouse).